Here is a 143-residue protein sequence, read N- to C-terminus: Large ribosomal subunit protein uL11 (143 aa).

Belongs to the universal ribosomal protein uL11 family. Part of the ribosomal stalk of the 50S ribosomal subunit. Interacts with L10 and the large rRNA to form the base of the stalk. L10 forms an elongated spine to which L12 dimers bind in a sequential fashion forming a multimeric L10(L12)X complex. In terms of processing, one or more lysine residues are methylated.

Its function is as follows. Forms part of the ribosomal stalk which helps the ribosome interact with GTP-bound translation factors. The sequence is that of Large ribosomal subunit protein uL11 from Variovorax paradoxus (strain S110).